The chain runs to 572 residues: Methionine--tRNA ligase (572 aa).

A 'HIGH' region motif is present at residues 11–21 (PYVNHVPHLGT). Positions 143, 146, 156, and 159 each coordinate Zn(2+). Residues 334 to 338 (QFSKS) carry the 'KMSKS' region motif. Lys337 contacts ATP.

Belongs to the class-I aminoacyl-tRNA synthetase family. MetG type 1 subfamily. It depends on Zn(2+) as a cofactor.

It is found in the cytoplasm. It carries out the reaction tRNA(Met) + L-methionine + ATP = L-methionyl-tRNA(Met) + AMP + diphosphate. In terms of biological role, is required not only for elongation of protein synthesis but also for the initiation of all mRNA translation through initiator tRNA(fMet) aminoacylation. This chain is Methionine--tRNA ligase (metG), found in Aeropyrum pernix (strain ATCC 700893 / DSM 11879 / JCM 9820 / NBRC 100138 / K1).